The primary structure comprises 319 residues: 4-hydroxy-3-methylbut-2-enyl diphosphate reductase (319 aa).

C17 lines the [4Fe-4S] cluster pocket. Residues H46 and H79 each coordinate (2E)-4-hydroxy-3-methylbut-2-enyl diphosphate. Dimethylallyl diphosphate is bound by residues H46 and H79. Positions 46 and 79 each coordinate isopentenyl diphosphate. C101 serves as a coordination point for [4Fe-4S] cluster. H129 serves as a coordination point for (2E)-4-hydroxy-3-methylbut-2-enyl diphosphate. H129 contributes to the dimethylallyl diphosphate binding site. H129 serves as a coordination point for isopentenyl diphosphate. The active-site Proton donor is E131. T170 is a binding site for (2E)-4-hydroxy-3-methylbut-2-enyl diphosphate. Position 200 (C200) interacts with [4Fe-4S] cluster. 4 residues coordinate (2E)-4-hydroxy-3-methylbut-2-enyl diphosphate: S228, S229, N230, and S273. Residues S228, S229, N230, and S273 each coordinate dimethylallyl diphosphate. The isopentenyl diphosphate site is built by S228, S229, N230, and S273.

It belongs to the IspH family. Requires [4Fe-4S] cluster as cofactor.

It catalyses the reaction isopentenyl diphosphate + 2 oxidized [2Fe-2S]-[ferredoxin] + H2O = (2E)-4-hydroxy-3-methylbut-2-enyl diphosphate + 2 reduced [2Fe-2S]-[ferredoxin] + 2 H(+). The enzyme catalyses dimethylallyl diphosphate + 2 oxidized [2Fe-2S]-[ferredoxin] + H2O = (2E)-4-hydroxy-3-methylbut-2-enyl diphosphate + 2 reduced [2Fe-2S]-[ferredoxin] + 2 H(+). The protein operates within isoprenoid biosynthesis; dimethylallyl diphosphate biosynthesis; dimethylallyl diphosphate from (2E)-4-hydroxy-3-methylbutenyl diphosphate: step 1/1. It participates in isoprenoid biosynthesis; isopentenyl diphosphate biosynthesis via DXP pathway; isopentenyl diphosphate from 1-deoxy-D-xylulose 5-phosphate: step 6/6. In terms of biological role, catalyzes the conversion of 1-hydroxy-2-methyl-2-(E)-butenyl 4-diphosphate (HMBPP) into a mixture of isopentenyl diphosphate (IPP) and dimethylallyl diphosphate (DMAPP). Acts in the terminal step of the DOXP/MEP pathway for isoprenoid precursor biosynthesis. This chain is 4-hydroxy-3-methylbut-2-enyl diphosphate reductase, found in Cereibacter sphaeroides (strain ATCC 17023 / DSM 158 / JCM 6121 / CCUG 31486 / LMG 2827 / NBRC 12203 / NCIMB 8253 / ATH 2.4.1.) (Rhodobacter sphaeroides).